Consider the following 638-residue polypeptide: Threonine--tRNA ligase (638 aa).

Residues 1–61 (MPVVTLPDGS…EADAEVALVT (61 aa)) form the TGS domain. The segment at 242-533 (DHRKLGKALD…LTEHYAGQYP (292 aa)) is catalytic. 3 residues coordinate Zn(2+): cysteine 333, histidine 384, and histidine 510.

This sequence belongs to the class-II aminoacyl-tRNA synthetase family. As to quaternary structure, homodimer. Requires Zn(2+) as cofactor.

The protein localises to the cytoplasm. The catalysed reaction is tRNA(Thr) + L-threonine + ATP = L-threonyl-tRNA(Thr) + AMP + diphosphate + H(+). Functionally, catalyzes the attachment of threonine to tRNA(Thr) in a two-step reaction: L-threonine is first activated by ATP to form Thr-AMP and then transferred to the acceptor end of tRNA(Thr). Also edits incorrectly charged L-seryl-tRNA(Thr). The polypeptide is Threonine--tRNA ligase (Methylococcus capsulatus (strain ATCC 33009 / NCIMB 11132 / Bath)).